A 146-amino-acid chain; its full sequence is Keratin-associated protein 12-2 (146 aa).

Repeat copies occupy residues 10–14, 15–19, 20–24, 25–29, 34–38, 40–44, 45–49, 55–59, 60–64, 65–69, 70–74, 75–79, 80–84, 85–89, 90–94, 95–99, 100–104, 105–109, 110–114, 120–124, 125–129, 130–134, and 135–139. The tract at residues 10–139 is 23 X 5 AA approximate repeats; that stretch reads CQPACCAPSP…CTSVLCRPIS (130 aa).

It belongs to the KRTAP type 12 family. Interacts with hair keratins. Restricted to a narrow region of the hair fiber cuticle, lying approximately 20 cell layers above the apex of the dermal papilla of the hair root; not detected in any other tissues.

In terms of biological role, in the hair cortex, hair keratin intermediate filaments are embedded in an interfilamentous matrix, consisting of hair keratin-associated proteins (KRTAP), which are essential for the formation of a rigid and resistant hair shaft through their extensive disulfide bond cross-linking with abundant cysteine residues of hair keratins. The matrix proteins include the high-sulfur and high-glycine-tyrosine keratins. This is Keratin-associated protein 12-2 (KRTAP12-2) from Homo sapiens (Human).